We begin with the raw amino-acid sequence, 3344 residues long: Genome polyprotein (3344 aa).

In terms of domain architecture, Peptidase S30 spans 408-547; it reads IVGNSKINYI…RSVYAKMDQY (140 aa). Catalysis depends on for P1 proteinase activity residues His-456, Asp-465, and Ser-499. An Involved in interaction with stylet and aphid transmission motif is present at residues 598–601; it reads KITC. An Involved in virions binding and aphid transmission motif is present at residues 856–858; that stretch reads PTK. A Peptidase C6 domain is found at 882-1004; the sequence is MYIAKKGYCY…DSEMKHYIVG (123 aa). Catalysis depends on for helper component proteinase activity residues Cys-890 and His-963. Residues 1473–1625 form the Helicase ATP-binding domain; that stretch reads EIAHSPEREF…TQFPTKIVTE (153 aa). 1486–1493 serves as a coordination point for ATP; that stretch reads GAVGSGKS. The short motif at 1575–1578 is the DECH box element; sequence DECH. The Helicase C-terminal domain occupies 1644–1803; it reads DVTAFADNIL…GLPVMTHNVG (160 aa). Residues 2134–2141 carry the Nuclear localization signal motif; it reads KKGNKKGK. Residue Tyr-2156 is modified to O-(5'-phospho-RNA)-tyrosine. The Peptidase C4 domain occupies 2283–2499; that stretch reads GKSLCQGMRN…LSWGALKVWE (217 aa). Catalysis depends on for nuclear inclusion protein A activity residues His-2327, Asp-2362, and Cys-2431. In terms of domain architecture, RdRp catalytic spans 2761 to 2885; that stretch reads WVYCDADGSQ…AIHPDHEHVL (125 aa). The span at 3059 to 3093 shows a compositional bias: basic and acidic residues; that stretch reads KNEAVDAGLNEKLKEKEKQKEKEKEKQKEKEKDGA. The disordered stretch occupies residues 3059–3116; sequence KNEAVDAGLNEKLKEKEKQKEKEKEKQKEKEKDGASDGNDVSTSTKTGERDRDVNVGT.

Belongs to the potyviridae genome polyprotein family. Interacts with host eIF4E protein (via cap-binding region); this interaction mediates the translation of the VPg-viral RNA conjugates. Part of a complex that comprises VPg, RNA, host EIF4E and EIF4G; this interaction mediates the translation of the VPg-viral RNA conjugates. Post-translationally, VPg is uridylylated by the polymerase and is covalently attached to the 5'-end of the genomic RNA. This uridylylated form acts as a nucleotide-peptide primer for the polymerase. Potyviral RNA is expressed as two polyproteins which undergo post-translational proteolytic processing. Genome polyprotein is processed by NIa-pro, P1 and HC-pro proteinases resulting in the production of at least ten individual proteins. P3N-PIPO polyprotein is cleaved by P1 and HC-pro proteinases resulting in the production of three individual proteins. The P1 proteinase and the HC-pro cleave only their respective C-termini autocatalytically. 6K1 is essential for proper proteolytic separation of P3 from CI.

Its subcellular location is the host cytoplasmic vesicle. It localises to the host nucleus. The protein resides in the virion. The enzyme catalyses RNA(n) + a ribonucleoside 5'-triphosphate = RNA(n+1) + diphosphate. It catalyses the reaction Hydrolyzes glutaminyl bonds, and activity is further restricted by preferences for the amino acids in P6 - P1' that vary with the species of potyvirus, e.g. Glu-Xaa-Xaa-Tyr-Xaa-Gln-|-(Ser or Gly) for the enzyme from tobacco etch virus. The natural substrate is the viral polyprotein, but other proteins and oligopeptides containing the appropriate consensus sequence are also cleaved.. It carries out the reaction Hydrolyzes a Gly-|-Gly bond at its own C-terminus, commonly in the sequence -Tyr-Xaa-Val-Gly-|-Gly, in the processing of the potyviral polyprotein.. Required for aphid transmission and also has proteolytic activity. Only cleaves a Gly-Gly dipeptide at its own C-terminus. Interacts with virions and aphid stylets. Acts as a suppressor of RNA-mediated gene silencing, also known as post-transcriptional gene silencing (PTGS), a mechanism of plant viral defense that limits the accumulation of viral RNAs. May have RNA-binding activity. Its function is as follows. Has helicase activity. It may be involved in replication. Functionally, indispensable for virus replication. In terms of biological role, mediates the cap-independent, EIF4E-dependent translation of viral genomic RNAs. Binds to the cap-binding site of host EIF4E and thus interferes with the host EIF4E-dependent mRNA export and translation. VPg-RNA directly binds EIF4E and is a template for transcription. Also forms trimeric complexes with EIF4E-EIF4G, which are templates for translation. Has RNA-binding and proteolytic activities. Its function is as follows. An RNA-dependent RNA polymerase that plays an essential role in the virus replication. Functionally, involved in aphid transmission, cell-to-cell and systemis movement, encapsidation of the viral RNA and in the regulation of viral RNA amplification. This Carica papaya (Papaya) protein is Genome polyprotein.